The primary structure comprises 82 residues: Small ribosomal subunit protein bS16 (82 aa).

It belongs to the bacterial ribosomal protein bS16 family.

The protein is Small ribosomal subunit protein bS16 of Francisella tularensis subsp. holarctica (strain FTNF002-00 / FTA).